We begin with the raw amino-acid sequence, 459 residues long: ATP synthase subunit beta 1 (459 aa).

Gly148–Thr155 is a binding site for ATP.

The protein belongs to the ATPase alpha/beta chains family. In terms of assembly, F-type ATPases have 2 components, CF(1) - the catalytic core - and CF(0) - the membrane proton channel. CF(1) has five subunits: alpha(3), beta(3), gamma(1), delta(1), epsilon(1). CF(0) has three main subunits: a(1), b(2) and c(9-12). The alpha and beta chains form an alternating ring which encloses part of the gamma chain. CF(1) is attached to CF(0) by a central stalk formed by the gamma and epsilon chains, while a peripheral stalk is formed by the delta and b chains.

It localises to the cell inner membrane. The catalysed reaction is ATP + H2O + 4 H(+)(in) = ADP + phosphate + 5 H(+)(out). In terms of biological role, produces ATP from ADP in the presence of a proton gradient across the membrane. The catalytic sites are hosted primarily by the beta subunits. The chain is ATP synthase subunit beta 1 from Nitrosospira multiformis (strain ATCC 25196 / NCIMB 11849 / C 71).